Reading from the N-terminus, the 190-residue chain is Holliday junction branch migration complex subunit RuvA (190 aa).

The tract at residues 1–64 (MIGKLSGTLD…EDAQILYGFA (64 aa)) is domain I. Residues 65–137 (TSQERAAFRE…LKGKLGPDIG (73 aa)) form a domain II region. Positions 137–141 (GVAAS) are flexible linker. Residues 142-190 (VANDSQADILQALLALGYSDKEAAAALKALPSDVGVSEGIRLALRALGK) form a domain III region.

The protein belongs to the RuvA family. As to quaternary structure, homotetramer. Forms an RuvA(8)-RuvB(12)-Holliday junction (HJ) complex. HJ DNA is sandwiched between 2 RuvA tetramers; dsDNA enters through RuvA and exits via RuvB. An RuvB hexamer assembles on each DNA strand where it exits the tetramer. Each RuvB hexamer is contacted by two RuvA subunits (via domain III) on 2 adjacent RuvB subunits; this complex drives branch migration. In the full resolvosome a probable DNA-RuvA(4)-RuvB(12)-RuvC(2) complex forms which resolves the HJ.

Its subcellular location is the cytoplasm. Functionally, the RuvA-RuvB-RuvC complex processes Holliday junction (HJ) DNA during genetic recombination and DNA repair, while the RuvA-RuvB complex plays an important role in the rescue of blocked DNA replication forks via replication fork reversal (RFR). RuvA specifically binds to HJ cruciform DNA, conferring on it an open structure. The RuvB hexamer acts as an ATP-dependent pump, pulling dsDNA into and through the RuvAB complex. HJ branch migration allows RuvC to scan DNA until it finds its consensus sequence, where it cleaves and resolves the cruciform DNA. The protein is Holliday junction branch migration complex subunit RuvA of Albidiferax ferrireducens (strain ATCC BAA-621 / DSM 15236 / T118) (Rhodoferax ferrireducens).